The chain runs to 408 residues: ATP phosphoribosyltransferase regulatory subunit (408 aa).

Belongs to the class-II aminoacyl-tRNA synthetase family. HisZ subfamily. As to quaternary structure, heteromultimer composed of HisG and HisZ subunits.

The protein resides in the cytoplasm. Its pathway is amino-acid biosynthesis; L-histidine biosynthesis; L-histidine from 5-phospho-alpha-D-ribose 1-diphosphate: step 1/9. Required for the first step of histidine biosynthesis. May allow the feedback regulation of ATP phosphoribosyltransferase activity by histidine. This Thermosynechococcus vestitus (strain NIES-2133 / IAM M-273 / BP-1) protein is ATP phosphoribosyltransferase regulatory subunit.